A 66-amino-acid polypeptide reads, in one-letter code: MAEKKKGKTITVEQIGSPIRRPKEQRATLVGLGLNKLHRRSTLEDTPSVRGMIAKVEHLVRVVDEA.

Belongs to the universal ribosomal protein uL30 family. Part of the 50S ribosomal subunit.

This chain is Large ribosomal subunit protein uL30, found in Chelativorans sp. (strain BNC1).